The following is a 302-amino-acid chain: Negative regulator of the PHO system (302 aa).

The Protein kinase domain occupies 6-296 (FKQLEKLGNG…AKQALLHPWF (291 aa)). Residues 12–20 (LGNGTYATV) and K35 each bind ATP. Residue D132 is the Proton acceptor of the active site.

Belongs to the protein kinase superfamily. CMGC Ser/Thr protein kinase family. CDC2/CDKX subfamily. As to quaternary structure, interacts with a number of cyclins.

The enzyme catalyses L-seryl-[protein] + ATP = O-phospho-L-seryl-[protein] + ADP + H(+). The catalysed reaction is L-threonyl-[protein] + ATP = O-phospho-L-threonyl-[protein] + ADP + H(+). When phosphate concentrations are high it phosphorylates the PHO4 transcription factor thus establishing repression. This Candida glabrata (strain ATCC 2001 / BCRC 20586 / JCM 3761 / NBRC 0622 / NRRL Y-65 / CBS 138) (Yeast) protein is Negative regulator of the PHO system (PHO85).